Here is a 611-residue protein sequence, read N- to C-terminus: DNA mismatch repair protein MutL (611 aa).

Belongs to the DNA mismatch repair MutL/HexB family.

Functionally, this protein is involved in the repair of mismatches in DNA. It is required for dam-dependent methyl-directed DNA mismatch repair. May act as a 'molecular matchmaker', a protein that promotes the formation of a stable complex between two or more DNA-binding proteins in an ATP-dependent manner without itself being part of a final effector complex. This Bartonella bacilliformis (strain ATCC 35685 / KC583 / Herrer 020/F12,63) protein is DNA mismatch repair protein MutL.